The chain runs to 712 residues: MISSRIGGAGGVELSRVNQQHDTVPAQTAHPNAVTAGMNPPLTPDQSGSHATESSSAGAARLNVAARHTQLLQAFKAEHGTAPVSGAPMISSRAALLIGSLLQAEPLPFEVMAEKLSPERYQLKQFQGSDLQQRLEKFAQPGQIPDKAEVGQLIKGFAQSVADQLEHFQLMHDASPATVGQHAKADKATLAVSQTALGEYAGRASKAIGEGLSNSIASLDEHISALDLTLQDAEQGNKESLHADRQALVDAKTTLVGLHADFVKSPEAKRLASVAAHTQLDNVVSDLVTARNTVGGWKGAGPIVAAAVPQFLSSMTHLGYVRLSTSDKLRDTIPETSSDANMLKASIIGMVAGIAHETVNSVVKPMFQAALQKTGLNERLNMVPMKAVDTNTVIPDPFELKSEHGELVKKTPEEVAQDKAFVKSERALLNQKKVQGSSTHPVGELMAYSAFGGSQAVRQMLNDVHQINGQTLSARALASGFGGAVSASSQTLLQLKSNYVDPQGRKIPVFTPDRAESDLKKDLLKGMDLREPSVRTTFYSKALSGIQSSALTSALPPVTAQAEGASGTLSAGAILRNMALAATGSVSYLSTLYTNQSVTAEAKALKAAGMGGATPMLDRTETALNNIRHPNRESLPHTFQKSTLSGIPRVAENAYHMGRGALQLPTQMAVDTVRVVDEGVLNAVASAREALKQPTKDDDALRALEEGLLDPR.

The segment at 22–58 is disordered; sequence DTVPAQTAHPNAVTAGMNPPLTPDQSGSHATESSSAG. The span at 44-57 shows a compositional bias: polar residues; it reads PDQSGSHATESSSA.

As to quaternary structure, interacts with the chaperone ShcM. Interacts with host plant BIG5/ATMIN7.

The protein localises to the secreted. Its subcellular location is the host membrane. Its function is as follows. Involved in the suppression of basal resistance and promotion of disease symptoms in plants. Mediates the ubiquitination and degradation, via the host proteasome, of a low-abundance immunity-associated protein in Arabidopsis thaliana. May be involved in the inhibition of a host vesicle trafficking pathway. The chain is Effector protein HopM1 (hopM1) from Pseudomonas syringae pv. tomato (strain ATCC BAA-871 / DC3000).